The following is a 47-amino-acid chain: Bacteriocin curvaticin DN317 (47 aa).

Belongs to the bacteriocin class IIA/YGNGV family.

It is found in the secreted. Has bactericidal activity against various Gram-negative Campylobacter, and the Gram-positive L.monocytogenes and B.subtilis. In vitro, inhibits C.jejuni strain ATCC 33560 (MIC=27.3 ug/ml). The chain is Bacteriocin curvaticin DN317 from Latilactobacillus curvatus (Lactobacillus curvatus).